We begin with the raw amino-acid sequence, 702 residues long: Vacuolar protein sorting-associated protein 52 homolog (702 aa).

Positions 505 to 535 form a coiled coil; that stretch reads KEMGAKMEAVLENSEDSIEQLLTRMSAMQQT.

It belongs to the VPS52 family. Component of the Golgi-associated retrograde protein (GARP) complex, also called VFT (VPS fifty-three) complex, composed of vps-51, vps-52, vps-53 and vps-54. Within the complex interacts with vps-53 and vps-54. Interacts with the small GTPases rab-6.1 and rab-6.2. Ubiquitously expressed, with particularly strong expression in neuronal cells. Specifically expressed in head and tail neurons and in the pharynx and ventral cord motor neurons.

Its subcellular location is the golgi apparatus. It localises to the trans-Golgi network. The protein resides in the perikaryon. The protein localises to the cytoplasm. It is found in the perinuclear region. Functionally, acts as a component of the GARP complex that is involved in retrograde transport from early and late endosomes to the trans-Golgi network (TGN). The GARP complex facilitates tethering as well as SNARE complex assembly at the Golgi. Plays a role in the trafficking of cargo to dense-core vesicles, probably through association with the EARP-interacting protein eipr-1. Important for neuronal function. The polypeptide is Vacuolar protein sorting-associated protein 52 homolog (Caenorhabditis elegans).